The following is a 625-amino-acid chain: ATP-dependent RNA helicase mrh4, mitochondrial (625 aa).

The N-terminal 16 residues, 1 to 16 (MWKTARDSVCLICRSA), are a transit peptide targeting the mitochondrion. Over residues 19–28 (TTTSTSARAS) the composition is skewed to low complexity. Positions 19 to 119 (TTTSTSARAS…DKNTKGQKAL (101 aa)) are disordered. The segment covering 90-113 (DPRKAPKPKPVEEDSRRDKRDKNT) has biased composition (basic and acidic residues). The Q motif motif lies at 144–177 (QAFDQFDLLPVVKEAIAQEALKGMTEIKPTPVQR). The Helicase ATP-binding domain occupies 195–406 (PKSDNGREEF…EEQFPYINRI (212 aa)). 208–215 (AETGSGKT) provides a ligand contact to ATP. The DEAD box signature appears at 353-356 (DEAD). Residues 453–625 (EGPKSEIDVK…ESMFMGQALV (173 aa)) form the Helicase C-terminal domain.

Belongs to the DEAD box helicase family. MRH4 subfamily.

Its subcellular location is the mitochondrion. It carries out the reaction ATP + H2O = ADP + phosphate + H(+). Its function is as follows. ATP-binding RNA helicase involved in mitochondrial RNA metabolism. Required for maintenance of mitochondrial DNA. The polypeptide is ATP-dependent RNA helicase mrh4, mitochondrial (drh-15) (Neurospora crassa (strain ATCC 24698 / 74-OR23-1A / CBS 708.71 / DSM 1257 / FGSC 987)).